A 519-amino-acid polypeptide reads, in one-letter code: Cytochrome P450 monooxygenase easM (519 aa).

The chain crosses the membrane as a helical span at residues 16–33; that stretch reads VAPALFASSISVLFLILS. Residues Asn-50 and Asn-353 are each glycosylated (N-linked (GlcNAc...) asparagine). A heme-binding site is contributed by Cys-458.

It belongs to the cytochrome P450 family. It depends on heme as a cofactor.

Its subcellular location is the membrane. The protein operates within alkaloid biosynthesis; ergot alkaloid biosynthesis. Its function is as follows. Cytochrome P450 monooxygenase; part of the gene cluster that mediates the biosynthesis of fumiclavanine C, a fungal ergot alkaloid. DmaW catalyzes the first step of ergot alkaloid biosynthesis by condensing dimethylallyl diphosphate (DMAP) and tryptophan to form 4-dimethylallyl-L-tryptophan. The second step is catalyzed by the methyltransferase easF that methylates 4-dimethylallyl-L-tryptophan in the presence of S-adenosyl-L-methionine, resulting in the formation of 4-dimethylallyl-L-abrine. The catalase easC and the FAD-dependent oxidoreductase easE then transform 4-dimethylallyl-L-abrine to chanoclavine-I which is further oxidized by EasD in the presence of NAD(+), resulting in the formation of chanoclavine-I aldehyde. EasA reduces chanoclavine-I aldehyde to dihydrochanoclavine-I aldehyde that spontaneously dehydrates to form 6,8-dimethyl-6,7-didehydroergoline. EasG then catalyzes the reduction of 6,8-dimethyl-6,7-didehydroergoline to form festuclavine. Hydrolysis of festuclavine by easM then leads to the formation of fumigaclavine B which is in turn acetylated by easN to fumigaclavine A. Finally, easL catalyzes the conversion of fumigaclavine A into fumigaclavine C by attaching a dimethylallyl moiety to C-2 of the indole nucleus. This Aspergillus fumigatus (strain ATCC MYA-4609 / CBS 101355 / FGSC A1100 / Af293) (Neosartorya fumigata) protein is Cytochrome P450 monooxygenase easM.